A 291-amino-acid polypeptide reads, in one-letter code: Venom metalloproteinase inhibitor DM43 (291 aa).

Ig-like V-type domains follow at residues 22–79 (TNVT…ILTS) and 114–171 (GLET…PASA). Asparagine 23 carries N-linked (GlcNAc...) asparagine glycosylation. Intrachain disulfides connect cysteine 28–cysteine 74 and cysteine 121–cysteine 163. Residues asparagine 156, asparagine 160, and asparagine 175 are each glycosylated (N-linked (GlcNAc...) asparagine). Positions 191–288 (PKANFYILND…DSNVLELDLS (98 aa)) constitute an Ig-like V-type 3 domain. A disulfide bridge connects residues cysteine 213 and cysteine 265.

In terms of assembly, homodimer. In terms of processing, N-glycosylated. In terms of tissue distribution, blood and milk.

Functionally, metalloproteinase inhibitor. In Didelphis marsupialis (Southern opossum), this protein is Venom metalloproteinase inhibitor DM43.